A 1215-amino-acid chain; its full sequence is Metabotropic glycine receptor (1215 aa).

The first 23 residues, 1–23 (MGAMAYPLLLCLLLAQLGLGAVG), serve as a signal peptide directing secretion. The segment at 23–66 (GASRDPQGRPDSPRERTPKGKPHAQQPGRASASDSSAPWSRSTD) is disordered. The Extracellular portion of the chain corresponds to 24–417 (ASRDPQGRPD…CFVQEDKYLR (394 aa)). The segment covering 28–40 (PQGRPDSPRERTP) has biased composition (basic and acidic residues). A compositionally biased stretch (low complexity) spans 52–64 (ASASDSSAPWSRS). The interval 85-281 (YLYTGDSHQL…CENGSYKPGW (197 aa)) is cache-like region. Residues N98 and N143 are each glycosylated (N-linked (GlcNAc...) asparagine). C99 and C272 are disulfide-bonded. S172 and R173 together coordinate glycine. N215 is a glycosylation site (N-linked (GlcNAc...) asparagine). E271 lines the glycine pocket. Residue N274 is glycosylated (N-linked (GlcNAc...) asparagine). D307 contributes to the glycine binding site. Residue N333 is glycosylated (N-linked (GlcNAc...) asparagine). The helical transmembrane segment at 418–439 (LAIISFQALCMLLDFVSMLVVY) threads the bilayer. Residues 440 to 451 (HFRKAKSIRASG) lie on the Cytoplasmic side of the membrane. A helical transmembrane segment spans residues 452–474 (LILLETILFGSLLLYFPVVILYF). At 475-478 (EPST) the chain is on the extracellular side. Residues 479-501 (FRCILLRWARLLGFATVYGTVTL) traverse the membrane as a helical segment. A disulfide bridge links C481 with C573. The Cytoplasmic segment spans residues 502-525 (KLHRVLKVFLSRTAQRIPYMTGGR). The helical transmembrane segment at 526-547 (VMRMLAVILLVVFWFLIGWTSS) threads the bilayer. The Extracellular portion of the chain corresponds to 548-576 (VCQNLEKQISLIGQGKTSDHLIFNMCLID). A helical transmembrane segment spans residues 577 to 597 (RWDYMTAVAEFLFLLWGVYLC). Topologically, residues 598–611 (YAVRTVPSAFHEPR) are cytoplasmic. Residues 612–633 (YMAVAVHNELIISAIFHTIRFV) traverse the membrane as a helical segment. The Extracellular segment spans residues 634–642 (LASRLQSDW). A helical membrane pass occupies residues 643–664 (MLMLYFAHTHLTVTVTIGLLLI). At 665 to 1215 (PKFSHSSNNP…KEEIWDSFKV (551 aa)) the chain is on the cytoplasmic side. Phosphoserine is present on residues S694, S705, and S708. The disordered stretch occupies residues 757 to 999 (RITEIPETVS…LNPGTTQMKD (243 aa)). Composition is skewed to basic and acidic residues over residues 769-781 (CSKE…DHGT) and 819-828 (STYDHVRDQT). Residue K774 forms a Glycyl lysine isopeptide (Lys-Gly) (interchain with G-Cter in ubiquitin) linkage. S865 is modified (phosphoserine). Basic and acidic residues predominate over residues 925–943 (VEERTKSQKPLPKDKETNR). Phosphoserine is present on S946. A compositionally biased stretch (polar residues) spans 979-998 (QRVNPTTANSDLNPGTTQMK). Short sequence motifs (VCPWE motif) lie at residues 1006–1010 (VCPWE) and 1071–1075 (VCLWE). S1080 bears the Phosphoserine mark. Positions 1117–1164 (SEELPPKAVASKTENENLNQIGHQEKKTSSSEENVRGSYNSSNNFQQP) are disordered. The span at 1139–1151 (HQEKKTSSSEENV) shows a compositional bias: basic and acidic residues. The segment covering 1153-1164 (GSYNSSNNFQQP) has biased composition (polar residues). The short motif at 1171–1175 (VCPWE) is the VCPWE motif 3 element.

Belongs to the G-protein coupled receptor 3 family. In terms of assembly, homodimer. Associates with the RGS7-GNB5 complex, promoting its localization to the cell membrane and regulating its GTPase activator activity. Interacts (via VCPWE motifs) with GNAO1. Interacts with GPC4. Interacts with EGFLAM.

It is found in the cell membrane. It localises to the postsynaptic cell membrane. The protein resides in the presynaptic cell membrane. Its subcellular location is the nucleus. In terms of biological role, metabotropic receptor for glycine that controls synapse formation and function in the brain. Acts as an atypical G-protein coupled receptor that recruits and regulates the RGS7-GNB5 complex instead of activating G proteins. In absence of glycine ligand, promotes the GTPase activator activity of RGS7, increasing the GTPase activity of G protein alpha subunits, thereby driving them into their inactive GDP-bound form. Glycine-binding changes the conformation of the intracellular surface, inhibiting the GTPase activator activity of the RGS7-GNB5 complex, promoting G protein alpha subunits into their active GTP-bound form and regulating cAMP levels. Also able to bind taurine, a compound closely related to glycine, but with a two-fold lower affinity. Glycine receptor-dependent regulation of cAMP controls key ion channels, kinases and neurotrophic factors involved in neuronal excitability and synaptic transmission. Plays a pivotal role in regulating mood and cognition via its ability to regulate neuronal excitability in L2/L3 pyramidal neurons of the prefrontal cortex. Also involved in spatial learning by regulating hippocampal CA1 neuronal excitability. Acts as a synaptic organizer in the hippocampus, required for proper mossy fiber-CA3 neurocircuitry establishment, structure and function: induces presynaptic differentiation in contacting axons via its interaction with GPC4. In addition to glycine, may also act as a receptor for osteocalcin (BGLAP) hormone: osteocalcin-binding initiates a signaling response that prevents neuronal apoptosis in the hippocampus and regulates the synthesis of neurotransmitters. This chain is Metabotropic glycine receptor, found in Homo sapiens (Human).